Reading from the N-terminus, the 270-residue chain is Aliphatic sulfonates import ATP-binding protein SsuB 3 (270 aa).

One can recognise an ABC transporter domain in the interval 17–238 (LAVRKLKKAF…VRGSHRLAAL (222 aa)). Position 49-56 (49-56 (GRSGCGKS)) interacts with ATP.

Belongs to the ABC transporter superfamily. Aliphatic sulfonates importer (TC 3.A.1.17.2) family. The complex is composed of two ATP-binding proteins (SsuB), two transmembrane proteins (SsuC) and a solute-binding protein (SsuA).

The protein resides in the cell inner membrane. The catalysed reaction is ATP + H2O + aliphatic sulfonate-[sulfonate-binding protein]Side 1 = ADP + phosphate + aliphatic sulfonateSide 2 + [sulfonate-binding protein]Side 1.. Part of the ABC transporter complex SsuABC involved in aliphatic sulfonates import. Responsible for energy coupling to the transport system. The polypeptide is Aliphatic sulfonates import ATP-binding protein SsuB 3 (Pseudomonas syringae pv. syringae (strain B728a)).